Here is a 1715-residue protein sequence, read N- to C-terminus: Rho guanine nucleotide exchange factor TIAM2 (1715 aa).

2 stretches are compositionally biased toward polar residues: residues 1–22 and 218–229; these read MGNSESQYTFQGSKNHSNTVTG and GSPSSQRPSPTD. 4 disordered regions span residues 1–27, 174–249, 263–294, and 385–418; these read MGNSESQYTFQGSKNHSNTVTGAKQKP, FHNG…WYDS, SFLAPSTPDPSLPSSFPPSDTKKPFNQSSSLS, and TGSLSRKKRKLQEPRSMEGSEYFDSHSDGLNAEG. A lipid anchor (N-myristoyl glycine) is attached at glycine 2. Residues 235–245 show a composition bias toward low complexity; it reads SKGSSLSSESS. Residues 395-411 show a composition bias toward basic and acidic residues; sequence LQEPRSMEGSEYFDSHS. The 115-residue stretch at 504-618 folds into the PH 1 domain; it reads VVRKAGWLFF…WVTAIHSACA (115 aa). Residues 665–692 adopt a coiled-coil conformation; it reads PKNRKAIENQIRQWEQNLEKFHMDLFRM. The 72-residue stretch at 831–902 folds into the RBD domain; that stretch reads VQTYVHFQDN…YMQEQVYDEI (72 aa). The 87-residue stretch at 911–997 folds into the PDZ domain; it reads DVQLTKTGDM…GLTLVARPVT (87 aa). The tract at residues 1092 to 1113 is disordered; it reads THTNSMEAPTESHDPPPRPLAR. Residues 1120–1314 form the DH domain; sequence RLRKVIQELV…EKVASHINEM (195 aa). The PH 2 domain occupies 1347–1478; it reads LLMHSTVSWL…KVIRSILREN (132 aa). A disordered region spans residues 1515 to 1582; the sequence is SLKGLRTSSS…EGLAEFPDGL (68 aa). Residues 1522 to 1532 are compositionally biased toward low complexity; the sequence is SSSSEWPSEPS. A compositionally biased stretch (polar residues) spans 1533–1552; the sequence is KGNSLDSDECSLSSGTQSSG. Residues 1557 to 1572 are compositionally biased toward basic and acidic residues; that stretch reads ESRRDSKSTELEKDAQ. Phosphoserine is present on serine 1604. Threonine 1662 is subject to Phosphothreonine.

Belongs to the TIAM family. Interacts with MAP1A, MAP1B, PARP1 and YWHAE. Interacts with CD44, PARD3 and MAPK8IP2. In terms of processing, phosphorylated on serine and threonine residues. Phosphorylated on Thr-1662 by Rho-kinase. Its phosphorylation by Rho-kinase inhibits its guanine nucleotide exchange activity, its interaction with MAP1A, MAP1B, PARP1 and YWHAE and reduces its ability to promote neurite growth. In terms of tissue distribution, expressed in fetal brain (at protein level). Expressed in the olfactory bulb, cortical plate of the cerebral cortex, caudate putamen, hippocampus, ependymal cells of the lateral surface of the lateral ventricles of the brain. Weakly expressed in heart, lung, liver, skeletal muscle, kidney and testis.

The protein resides in the cytoplasm. It is found in the cell projection. It localises to the lamellipodium. Its subcellular location is the filopodium. The protein localises to the growth cone. The protein resides in the neuron projection. It is found in the perikaryon. Its function is as follows. Modulates the activity of RHO-like proteins and connects extracellular signals to cytoskeletal activities. Acts as a GDP-dissociation stimulator protein that stimulates the GDP-GTP exchange activity of RHO-like GTPases and activates them. Activates specifically RAC1, but not CDC42 and RHOA. Mediates extracellular laminin signals to activate Rac1, contributing to neurite growth. Involved in lamellipodial formation and advancement of the growth cone of embryonic hippocampal neurons. Promotes migration of neurons in the cerebral cortex. When overexpressed, induces membrane ruffling accompanied by the accumulation of actin filaments along the altered plasma membrane. The sequence is that of Rho guanine nucleotide exchange factor TIAM2 from Mus musculus (Mouse).